We begin with the raw amino-acid sequence, 440 residues long: Methionine aminopeptidase 2-2 (440 aa).

A disordered region spans residues Met1–Glu102. Residues Asp36 to Glu46 are compositionally biased toward acidic residues. A compositionally biased stretch (basic residues) spans Ala56–Ser70. Residue His194 coordinates substrate. 3 residues coordinate a divalent metal cation: Asp214, Asp225, and His294. His302 provides a ligand contact to substrate. 2 residues coordinate a divalent metal cation: Glu327 and Glu421.

The protein belongs to the peptidase M24A family. Methionine aminopeptidase eukaryotic type 2 subfamily. Co(2+) serves as cofactor. It depends on Zn(2+) as a cofactor. Mn(2+) is required as a cofactor. The cofactor is Fe(2+).

It is found in the cytoplasm. It catalyses the reaction Release of N-terminal amino acids, preferentially methionine, from peptides and arylamides.. Functionally, cotranslationally removes the N-terminal methionine from nascent proteins. The N-terminal methionine is often cleaved when the second residue in the primary sequence is small and uncharged (Met-Ala-, Cys, Gly, Pro, Ser, Thr, or Val). This chain is Methionine aminopeptidase 2-2, found in Colletotrichum graminicola (strain M1.001 / M2 / FGSC 10212) (Maize anthracnose fungus).